Here is a 113-residue protein sequence, read N- to C-terminus: Protein USP1 (113 aa).

Positions 1 to 18 are cleaved as a signal peptide; it reads MKITMLFAALSAASGAFA. Tandem repeats lie at residues 32–37, 40–45, 46–49, 50–53, 59–65, and 69–75. Residues 32–45 are 2 X 6 AA repeats; sequence IGAGVGIGIGAGVG. A 2 X 4 AA approximate tandem repeats region spans residues 46–53; that stretch reads PYGYPYGA. The interval 59 to 75 is 2 X 7 AA approximate repeats; the sequence is LQLLPLRWLSLQWIPLR.

The protein resides in the secreted. The sequence is that of Protein USP1 (USP1) from Puccinia graminis (Black stem rust fungus).